Consider the following 282-residue polypeptide: ATP phosphoribosyltransferase (282 aa).

The protein belongs to the ATP phosphoribosyltransferase family. Long subfamily. It depends on Mg(2+) as a cofactor.

Its subcellular location is the cytoplasm. It carries out the reaction 1-(5-phospho-beta-D-ribosyl)-ATP + diphosphate = 5-phospho-alpha-D-ribose 1-diphosphate + ATP. It functions in the pathway amino-acid biosynthesis; L-histidine biosynthesis; L-histidine from 5-phospho-alpha-D-ribose 1-diphosphate: step 1/9. Feedback inhibited by histidine. In terms of biological role, catalyzes the condensation of ATP and 5-phosphoribose 1-diphosphate to form N'-(5'-phosphoribosyl)-ATP (PR-ATP). Has a crucial role in the pathway because the rate of histidine biosynthesis seems to be controlled primarily by regulation of HisG enzymatic activity. The protein is ATP phosphoribosyltransferase of Pyrobaculum neutrophilum (strain DSM 2338 / JCM 9278 / NBRC 100436 / V24Sta) (Thermoproteus neutrophilus).